Consider the following 138-residue polypeptide: MNFYLDVVSLTKTIFSGFVEKIRVSGSEGELGIYPGHAQLLSILKPGMVYIFHKKDKKEECIYISGGILEVQPSVVSILADVAIHAIDLDRSRILKTKKNAEESIKSNNTKINKDAILLQISKEIAKLRVLEVMDKFK.

The protein belongs to the ATPase epsilon chain family. As to quaternary structure, F-type ATPases have 2 components, CF(1) - the catalytic core - and CF(0) - the membrane proton channel. CF(1) has five subunits: alpha(3), beta(3), gamma(1), delta(1), epsilon(1). CF(0) has three main subunits: a, b and c.

Its subcellular location is the cell membrane. Its function is as follows. Produces ATP from ADP in the presence of a proton gradient across the membrane. The protein is ATP synthase epsilon chain (atpC) of Buchnera aphidicola subsp. Acyrthosiphon pisum (strain APS) (Acyrthosiphon pisum symbiotic bacterium).